Consider the following 187-residue polypeptide: Holliday junction branch migration complex subunit RuvA (187 aa).

The domain I stretch occupies residues 1-64; that stretch reads MIEYIRGIIE…EDGFQIFGFK (64 aa). The tract at residues 65 to 136 is domain II; sequence RKEELELFEK…ELKDKVPKEV (72 aa). The tract at residues 136-139 is flexible linker; that stretch reads VVVP. Residues 140 to 187 are domain III; sequence KEDSLLNEALEALLALGYTKSEAIYALSDVNCESVEQAVKEALKKLAK.

The protein belongs to the RuvA family. As to quaternary structure, homotetramer. Forms an RuvA(8)-RuvB(12)-Holliday junction (HJ) complex. HJ DNA is sandwiched between 2 RuvA tetramers; dsDNA enters through RuvA and exits via RuvB. An RuvB hexamer assembles on each DNA strand where it exits the tetramer. Each RuvB hexamer is contacted by two RuvA subunits (via domain III) on 2 adjacent RuvB subunits; this complex drives branch migration. In the full resolvosome a probable DNA-RuvA(4)-RuvB(12)-RuvC(2) complex forms which resolves the HJ.

Its subcellular location is the cytoplasm. Functionally, the RuvA-RuvB-RuvC complex processes Holliday junction (HJ) DNA during genetic recombination and DNA repair, while the RuvA-RuvB complex plays an important role in the rescue of blocked DNA replication forks via replication fork reversal (RFR). RuvA specifically binds to HJ cruciform DNA, conferring on it an open structure. The RuvB hexamer acts as an ATP-dependent pump, pulling dsDNA into and through the RuvAB complex. HJ branch migration allows RuvC to scan DNA until it finds its consensus sequence, where it cleaves and resolves the cruciform DNA. This chain is Holliday junction branch migration complex subunit RuvA, found in Caldanaerobacter subterraneus subsp. tengcongensis (strain DSM 15242 / JCM 11007 / NBRC 100824 / MB4) (Thermoanaerobacter tengcongensis).